We begin with the raw amino-acid sequence, 457 residues long: Multidrug resistance protein MdtK (457 aa).

The next 12 helical transmembrane spans lie at leucine 11 to valine 31, isoleucine 53 to alanine 73, tryptophan 93 to isoleucine 113, alanine 127 to alanine 147, glycine 160 to tyrosine 180, leucine 188 to methionine 208, leucine 243 to valine 263, isoleucine 276 to threonine 296, alanine 314 to valine 334, valine 350 to isoleucine 370, isoleucine 387 to alanine 407, and proline 418 to leucine 438.

It belongs to the multi antimicrobial extrusion (MATE) (TC 2.A.66.1) family. MdtK subfamily.

The protein resides in the cell inner membrane. In terms of biological role, multidrug efflux pump that functions probably as a Na(+)/drug antiporter. This is Multidrug resistance protein MdtK from Salmonella newport (strain SL254).